The chain runs to 494 residues: ATP synthase subunit beta (494 aa).

177-184 (GGAGVGKT) contacts ATP.

Belongs to the ATPase alpha/beta chains family. F-type ATPases have 2 components, CF(1) - the catalytic core - and CF(0) - the membrane proton channel. CF(1) has five subunits: alpha(3), beta(3), gamma(1), delta(1), epsilon(1). CF(0) has three main subunits: a(1), b(2) and c(9-12). The alpha and beta chains form an alternating ring which encloses part of the gamma chain. CF(1) is attached to CF(0) by a central stalk formed by the gamma and epsilon chains, while a peripheral stalk is formed by the delta and b chains.

It localises to the cell membrane. The enzyme catalyses ATP + H2O + 4 H(+)(in) = ADP + phosphate + 5 H(+)(out). Produces ATP from ADP in the presence of a proton gradient across the membrane. The catalytic sites are hosted primarily by the beta subunits. The sequence is that of ATP synthase subunit beta from Bifidobacterium adolescentis (strain ATCC 15703 / DSM 20083 / NCTC 11814 / E194a).